Reading from the N-terminus, the 245-residue chain is UPF0246 protein Cgl1995/cg2186 (245 aa).

The protein belongs to the UPF0246 family.

The polypeptide is UPF0246 protein Cgl1995/cg2186 (Corynebacterium glutamicum (strain ATCC 13032 / DSM 20300 / JCM 1318 / BCRC 11384 / CCUG 27702 / LMG 3730 / NBRC 12168 / NCIMB 10025 / NRRL B-2784 / 534)).